Reading from the N-terminus, the 364-residue chain is Histidinol-phosphate aminotransferase (364 aa).

The residue at position 226 (K226) is an N6-(pyridoxal phosphate)lysine.

This sequence belongs to the class-II pyridoxal-phosphate-dependent aminotransferase family. Histidinol-phosphate aminotransferase subfamily. In terms of assembly, homodimer. Pyridoxal 5'-phosphate serves as cofactor.

It carries out the reaction L-histidinol phosphate + 2-oxoglutarate = 3-(imidazol-4-yl)-2-oxopropyl phosphate + L-glutamate. The protein operates within amino-acid biosynthesis; L-histidine biosynthesis; L-histidine from 5-phospho-alpha-D-ribose 1-diphosphate: step 7/9. This Campylobacter jejuni subsp. jejuni serotype O:2 (strain ATCC 700819 / NCTC 11168) protein is Histidinol-phosphate aminotransferase.